The sequence spans 337 residues: Eukaryotic translation initiation factor 3 subunit H (337 aa).

One can recognise an MPN domain in the interval 21 to 153 (VQCDGLAVMK…LKAYRLTPQA (133 aa)).

Belongs to the eIF-3 subunit H family. Component of the eukaryotic translation initiation factor 3 (eIF-3) complex. The eIF-3 complex interacts with pix. Interacts with mxt.

It is found in the cytoplasm. Its function is as follows. Component of the eukaryotic translation initiation factor 3 (eIF-3) complex, which is involved in protein synthesis of a specialized repertoire of mRNAs and, together with other initiation factors, stimulates binding of mRNA and methionyl-tRNAi to the 40S ribosome. The eIF-3 complex specifically targets and initiates translation of a subset of mRNAs involved in cell proliferation. The protein is Eukaryotic translation initiation factor 3 subunit H of Drosophila ananassae (Fruit fly).